Here is a 432-residue protein sequence, read N- to C-terminus: Calcium uptake protein 2, mitochondrial (432 aa).

A mitochondrion-targeting transit peptide spans 1–22 (MAAAAGRSAWLAAWGGRLRRGL). The region spanning 169-204 (KPHSGFHVAFKMLDVDGNEMIERKEFVKLQKIISKQ) is the EF-hand 1 domain. Positions 182, 184, 186, 188, 190, and 193 each coordinate Ca(2+). The residue at position 202 (S202) is a Phosphoserine. The 36-residue stretch at 224 to 259 (EPGVNTTLQVRFFGKRGEKKLHYKEFRRFMENLQTE) folds into the EF-hand 2; degenerate domain. Positions 290–325 (TENKDIYWRNVREKLSVGESISLDEFKSFCHFTTHL) constitute an EF-hand 3; degenerate domain. Positions 359-394 (LSDNLLDTVFKIFDLDGDECLSHGEFLGVLKNRMHR) constitute an EF-hand 4 domain. The Ca(2+) site is built by D372, D374, D376, C378, and E383.

It belongs to the MICU1 family. MICU2 subfamily. Heterodimer; disulfide-linked; heterodimerizes with MICU1. Component of the uniplex complex, composed of MCU, EMRE/SMDT1, MICU1 and MICU2 in a 4:4:1:1 stoichiometry. As to expression, predominantly expressed in stomach, intestine, skeletal muscle, kidney, heart, testis, prostate and uterus.

It localises to the mitochondrion intermembrane space. It is found in the mitochondrion inner membrane. In terms of biological role, calcium sensor of the mitochondrial calcium uniporter (MCU) channel, which senses calcium level via its EF-hand domains. MICU1 and MICU2 form a disulfide-linked heterodimer that stimulates and inhibits MCU activity, depending on the concentration of calcium. At low calcium levels, MICU1 occludes the pore of the MCU channel, preventing mitochondrial calcium uptake. At higher calcium levels, calcium-binding to MICU1 and MICU2 induces a conformational change that weakens MCU-MICU1 interactions and moves the MICU1-MICU2 heterodimer away from the pore, allowing calcium permeation through the MCU channel. This is Calcium uptake protein 2, mitochondrial from Mus musculus (Mouse).